Reading from the N-terminus, the 196-residue chain is Rac-like GTP-binding protein RAC9 (196 aa).

GTP is bound at residue Gly13 to Thr20. The short motif at Tyr35–Phe43 is the Effector region element. Residues Asp60–Gln64 and Thr118–Asp121 each bind GTP. Cys193 is subject to Cysteine methyl ester. Cys193 carries S-geranylgeranyl cysteine lipidation. Residues Ala194–Leu196 constitute a propeptide, removed in mature form.

This sequence belongs to the small GTPase superfamily. Rho family.

The protein localises to the cytoplasm. It is found in the membrane. Functionally, inactive GDP-bound Rho GTPases reside in the cytosol, are found in a complex with Rho GDP-dissociation inhibitors (Rho GDIs), and are released from the GDI protein in order to translocate to membranes upon activation. This chain is Rac-like GTP-binding protein RAC9 (RAC9), found in Gossypium hirsutum (Upland cotton).